A 256-amino-acid chain; its full sequence is Cytoplasmic envelopment protein 1 (256 aa).

Belongs to the herpesviridae cytoplasmic envelopment protein 1 family.

It localises to the virion. It is found in the virion tegument. Its subcellular location is the host cytoplasm. The protein localises to the host Golgi apparatus. Plays a critical role in cytoplasmic virus egress. Participates in the final step of tegumentation and envelope acquisition within the host cytoplasm. The polypeptide is Cytoplasmic envelopment protein 1 (U75) (Homo sapiens (Human)).